A 208-amino-acid chain; its full sequence is CASP-like protein 3A1 (208 aa).

Polar residues-rich tracts occupy residues 1–11 (MGSFANGQNGS) and 17–33 (TPATGSNAALEPPTTSA). A disordered region spans residues 1–33 (MGSFANGQNGSELGIQTPATGSNAALEPPTTSA). Residues 1–43 (MGSFANGQNGSELGIQTPATGSNAALEPPTTSAAAPRCPRLGM) are Cytoplasmic-facing. A helical transmembrane segment spans residues 44 to 64 (AMVAARAAALVMALLSVSLMV). At 65–92 (SAKQRGTLAIFGIEIPLYAKWSLSDSLQ) the chain is on the extracellular side. Residues 93-113 (SLVGISAAAAAYSLAQLLSIA) traverse the membrane as a helical segment. At 114 to 128 (HTALKKAPVVPSRRY) the chain is on the cytoplasmic side. Residues 129–149 (AWMLLAGDQVFAYAMLSAGSA) form a helical membrane-spanning segment. At 150–183 (AAAVANLNRTGVRHTALPNFCKPLPRFCDLSAAS) the chain is on the extracellular side. Residue asparagine 157 is glycosylated (N-linked (GlcNAc...) asparagine). The chain crosses the membrane as a helical span at residues 184–204 (IACAFLGCAFLAASAVIDVIW). At 205–208 (LSRL) the chain is on the cytoplasmic side.

It belongs to the Casparian strip membrane proteins (CASP) family. In terms of assembly, homodimer and heterodimers.

The protein resides in the cell membrane. The protein is CASP-like protein 3A1 of Hordeum vulgare subsp. vulgare (Domesticated barley).